The sequence spans 442 residues: Trigger factor (442 aa).

Positions 162 to 247 (GDTVTIDYKG…IHEVKSKQLP (86 aa)) constitute a PPIase FKBP-type domain.

This sequence belongs to the FKBP-type PPIase family. Tig subfamily.

The protein resides in the cytoplasm. The enzyme catalyses [protein]-peptidylproline (omega=180) = [protein]-peptidylproline (omega=0). In terms of biological role, involved in protein export. Acts as a chaperone by maintaining the newly synthesized protein in an open conformation. Functions as a peptidyl-prolyl cis-trans isomerase. This chain is Trigger factor, found in Lactobacillus acidophilus (strain ATCC 700396 / NCK56 / N2 / NCFM).